The primary structure comprises 386 residues: MTVLKMTDLDLAGKRVLIREDLNVPVKDGVVKSDARILASLPTIKLALEKGAAVLVCSHLGRPEEGVYSEEDSLAPVAAYLSKALGREVPLVKDYLGGVEVKAGELVLLENVRFNKGEKKNSDELAQQYAALCDVFVMDAFGTAHRAQGSTHGVAKFAKVACAGPLLAAELEALGKALDKPARPMLAIVAGSKVSTKLDVLNSLADICDSLIVGGGIANTFLAAAGLPVGKSLYEADLVDTAKAIAAKVSVPLPVDVVVAKAFAEDAEATVKSVKDVADDDMILDIGPQTAQQFAEMLKASQTILWNGPVGVFEFDQFGNGTKALALAIAESPAFSIAGGGDTLAAIDKYGVSEQISYISTGGGAFLEFVEGKVLPAVEVLEQRAK.

Substrate contacts are provided by residues 21–23, Arg36, 59–62, Arg113, and Arg146; these read DLN and HLGR. ATP contacts are provided by residues Lys197, Glu314, and 340–343; that span reads GGDT.

This sequence belongs to the phosphoglycerate kinase family. Monomer.

The protein localises to the cytoplasm. It catalyses the reaction (2R)-3-phosphoglycerate + ATP = (2R)-3-phospho-glyceroyl phosphate + ADP. It functions in the pathway carbohydrate degradation; glycolysis; pyruvate from D-glyceraldehyde 3-phosphate: step 2/5. This chain is Phosphoglycerate kinase, found in Ectopseudomonas mendocina (strain ymp) (Pseudomonas mendocina).